A 41-amino-acid chain; its full sequence is Antimicrobial protein PN-AMP1 (41 aa).

The residue at position 1 (Gln1) is a Pyrrolidone carboxylic acid. A Chitin-binding type-1 domain is found at 1 to 41 (QQCGRQASGRLCGNRLCCSQWGYCGSTASYCGAGCQSQCRS). 4 disulfide bridges follow: Cys3-Cys18, Cys12-Cys24, Cys17-Cys31, and Cys35-Cys39.

Functionally, chitin-binding protein with a defensive function against numerous chitin containing fungal pathogens. It is also an inhibitor of Gram-positive bacteria such as B.subtilis. The sequence is that of Antimicrobial protein PN-AMP1 from Ipomoea nil (Japanese morning glory).